The primary structure comprises 86 residues: Large ribosomal subunit protein uL23 (86 aa).

It belongs to the universal ribosomal protein uL23 family. As to quaternary structure, part of the 50S ribosomal subunit. Contacts protein L29.

Binds to 23S rRNA. One of the proteins that surrounds the polypeptide exit tunnel on the outside of the ribosome. The protein is Large ribosomal subunit protein uL23 of Pyrococcus abyssi (strain GE5 / Orsay).